The primary structure comprises 397 residues: MCSIGEDDFGDEGATHAMLPGSSATGTVLSAGSCSKCNLASDELYKLNFRAAECQLCFLSYARHKFRAALGAAKALPRSAEVLLLVDGSGASLVLLDMLHFAQTQNTFKRLHCNARVLYIDACGNDSLSSLHKLHERYAPFEFYVIQLNAEPKSLQSLKEYSASIVNATQQELRSLTARQDYGLQQRKRLIGAVAAHLQCSHVFESSISSTLATQLLTSVALGRGGSVALDVALLDDRLQDDIKLLRPLKDLNEQEVQFYVHAQQLQPFTSENELDQSSAASLQNLTSAFVANLQINYASTVSTIFRTGDKIAAKQQTNVDPTTTCTLCHSVLDHQLSDTLLAIEYSRAVSEMGVALQQHDNMEALEQRARQRLTAAQDLCHACRNIQAELTSGNIP.

It belongs to the CTU2/NCS2 family.

The protein localises to the cytoplasm. It functions in the pathway tRNA modification; 5-methoxycarbonylmethyl-2-thiouridine-tRNA biosynthesis. Its function is as follows. Plays a central role in 2-thiolation of mcm(5)S(2)U at tRNA wobble positions of tRNA(Lys), tRNA(Glu) and tRNA(Gln). May act by forming a heterodimer with NCS6/CTU1 that ligates sulfur from thiocarboxylated URM1 onto the uridine of tRNAs at wobble position. This is Cytoplasmic tRNA 2-thiolation protein 2 from Drosophila grimshawi (Hawaiian fruit fly).